The following is a 444-amino-acid chain: ATP-dependent protease ATPase subunit HslU (444 aa).

ATP contacts are provided by residues Ile-18, 60-65, Asp-257, Glu-322, and Arg-394; that span reads GVGKTE.

The protein belongs to the ClpX chaperone family. HslU subfamily. In terms of assembly, a double ring-shaped homohexamer of HslV is capped on each side by a ring-shaped HslU homohexamer. The assembly of the HslU/HslV complex is dependent on binding of ATP.

Its subcellular location is the cytoplasm. ATPase subunit of a proteasome-like degradation complex; this subunit has chaperone activity. The binding of ATP and its subsequent hydrolysis by HslU are essential for unfolding of protein substrates subsequently hydrolyzed by HslV. HslU recognizes the N-terminal part of its protein substrates and unfolds these before they are guided to HslV for hydrolysis. This Psychromonas ingrahamii (strain DSM 17664 / CCUG 51855 / 37) protein is ATP-dependent protease ATPase subunit HslU.